The sequence spans 77 residues: Probable Vpr-like protein (77 aa).

The Nuclear export signal signature appears at 34–42; the sequence is LIRLLQGLL. Residues 44 to 53 carry the Nuclear localization signal motif; the sequence is RLRFRKPKSK.

The protein resides in the virion. Its subcellular location is the host nucleus. Functionally, seems to function as a Vpr-like protein, since it mediates host cell cycle arrest in G2 phase. Cell cycle arrest creates a favorable environment for maximizing viral expression and production. In Felidae (cat family), this protein is Probable Vpr-like protein.